A 783-amino-acid chain; its full sequence is Ubiquitin carboxyl-terminal hydrolase 1 (783 aa).

Disordered stretches follow at residues Met-1 to Arg-22 and Lys-34 to Ser-55. Positions Ser-7 to Ser-16 are enriched in polar residues. Phosphoserine occurs at positions 16 and 42. Basic and acidic residues predominate over residues Asn-45–Ser-55. The residue at position 67 (Ser-67) is a Phosphoserine. Residues Val-81 to Leu-783 enclose the USP domain. Cys-90 functions as the Nucleophile in the catalytic mechanism. The disordered stretch occupies residues Glu-234–Ile-311. 2 stretches are compositionally biased toward basic and acidic residues: residues Asp-250 to Ala-273 and Ile-284 to Arg-296. Position 473 is a phosphoserine (Ser-473). Catalysis depends on His-591, which acts as the Proton acceptor. Residues Pro-685–Ile-722 are disordered. Ser-766 is modified (phosphoserine).

This sequence belongs to the peptidase C19 family. As to quaternary structure, interacts with FANCD2 and PCNA. Interacts with WDR48. Interacts with ATAD5; the interaction regulates USP1-mediated PCNA deubiquitination. Autocatalytic cleavage of USP1 following UV irradiation inactivates it, leading to an increase in ubiquitinated PCNA, recruitment of POLH and translesion synthesis. In terms of processing, ubiquitinated by the CRL2(KLHDC2) complex following autocatalytic cleavage, leading to its degradation: the CRL2(KLHDC2) complex recognizes the diglycine (Gly-Gly) at the C-terminus.

The protein resides in the nucleus. The catalysed reaction is Thiol-dependent hydrolysis of ester, thioester, amide, peptide and isopeptide bonds formed by the C-terminal Gly of ubiquitin (a 76-residue protein attached to proteins as an intracellular targeting signal).. In terms of biological role, negative regulator of DNA damage repair which specifically deubiquitinates monoubiquitinated FANCD2. Also involved in PCNA-mediated translesion synthesis (TLS) by deubiquitinating monoubiquitinated PCNA. Has almost no deubiquitinating activity by itself and requires the interaction with WDR48 to have a high activity. The polypeptide is Ubiquitin carboxyl-terminal hydrolase 1 (Bos taurus (Bovine)).